The primary structure comprises 186 residues: ATP synthase subunit b' (186 aa).

Residues 39–59 (IFWLLLALGAIYWLLKNIAIP) form a helical membrane-spanning segment.

It belongs to the ATPase B chain family. In terms of assembly, F-type ATPases have 2 components, F(1) - the catalytic core - and F(0) - the membrane proton channel. F(1) has five subunits: alpha(3), beta(3), gamma(1), delta(1), epsilon(1). F(0) has four main subunits: a(1), b(1), b'(1) and c(10-14). The alpha and beta chains form an alternating ring which encloses part of the gamma chain. F(1) is attached to F(0) by a central stalk formed by the gamma and epsilon chains, while a peripheral stalk is formed by the delta, b and b' chains.

Its subcellular location is the cellular chromatophore membrane. Its function is as follows. F(1)F(0) ATP synthase produces ATP from ADP in the presence of a proton or sodium gradient. F-type ATPases consist of two structural domains, F(1) containing the extramembraneous catalytic core and F(0) containing the membrane proton channel, linked together by a central stalk and a peripheral stalk. During catalysis, ATP synthesis in the catalytic domain of F(1) is coupled via a rotary mechanism of the central stalk subunits to proton translocation. Functionally, component of the F(0) channel, it forms part of the peripheral stalk, linking F(1) to F(0). The b'-subunit is a diverged and duplicated form of b found in plants and photosynthetic bacteria. The sequence is that of ATP synthase subunit b' from Rhodobacter capsulatus (Rhodopseudomonas capsulata).